We begin with the raw amino-acid sequence, 443 residues long: ATP-dependent protease ATPase subunit HslU (443 aa).

ATP-binding positions include valine 18 and 60–65; that span reads GVGKTE. The segment at 139 to 160 is disordered; that stretch reads AKNNWGQPEESGEPSSARQNFR. Residues aspartate 256, glutamate 321, and arginine 393 each coordinate ATP.

The protein belongs to the ClpX chaperone family. HslU subfamily. In terms of assembly, a double ring-shaped homohexamer of HslV is capped on each side by a ring-shaped HslU homohexamer. The assembly of the HslU/HslV complex is dependent on binding of ATP.

It is found in the cytoplasm. In terms of biological role, ATPase subunit of a proteasome-like degradation complex; this subunit has chaperone activity. The binding of ATP and its subsequent hydrolysis by HslU are essential for unfolding of protein substrates subsequently hydrolyzed by HslV. HslU recognizes the N-terminal part of its protein substrates and unfolds these before they are guided to HslV for hydrolysis. The protein is ATP-dependent protease ATPase subunit HslU of Sodalis glossinidius (strain morsitans).